We begin with the raw amino-acid sequence, 691 residues long: POU domain, class 6, transcription factor 2 (691 aa).

The span at 25–36 (MNAELRGEDKAA) shows a compositional bias: basic and acidic residues. 3 disordered regions span residues 25-93 (MNAE…PVGP), 186-297 (LQQQ…LQLV), and 435-461 (SQAS…SALS). The span at 186–195 (LQQQQQQQQQ) shows a compositional bias: low complexity. The span at 196-210 (QPPPSTNQHPQPAPQ) shows a compositional bias: pro residues. Over residues 211 to 220 (APSQSQQQPL) the composition is skewed to low complexity. Positions 221 to 238 (QPTPPQQPPPASQQPPAP) are enriched in pro residues. Low complexity-rich tracts occupy residues 239–280 (TSQL…SQSP) and 438–461 (SMSQ…SALS). The POU-specific domain maps to 476-586 (VDGVNLEEIR…VLERWMAEAE (111 aa)). The homeobox DNA-binding region spans 607 to 666 (KRKRRTSFTPQALEILNAHFEKNTHPSGQEMTEIAEKLNYDREVVRVWFCNKRQALKNTI).

This sequence belongs to the POU transcription factor family. Class-6 subfamily. As to expression, expressed only within the CNS, where its expression is restricted to the medical habenulla, to a dispersed population of neurons in the dorsal hypothalamus, and to subsets of ganglion and amacrine cells in the retina.

The protein resides in the nucleus. Functionally, probable transcription factor likely to be involved in early steps in the differentiation of amacrine and ganglion cells. Recognizes and binds to the DNA sequence 5'-ATGCAAAT-3'. Isoform 1 does not bind DNA. In Homo sapiens (Human), this protein is POU domain, class 6, transcription factor 2 (POU6F2).